The sequence spans 486 residues: Transmembrane protein 39A (486 aa).

The N-linked (GlcNAc...) asparagine glycan is linked to Asn31. A run of 8 helical transmembrane segments spans residues 72–92, 110–130, 155–175, 182–202, 285–305, 317–337, 418–438, and 444–464; these read SLFF…IQYI, TSLN…VMLA, LILA…WTLV, SVLN…LYCF, EVLF…LCFV, CEHL…QLLP, VLNL…YSLL, and NHTL…FKLL.

It belongs to the TMEM39 family. Interacts with SACM1L, SEC23A and SEC24A.

It localises to the endoplasmic reticulum membrane. Its function is as follows. Regulates autophagy by controlling the spatial distribution and levels of the intracellular phosphatidylinositol 4-phosphate (PtdIns(4)P) pools. Modulates (PtdIns(4)P) levels by regulating the ER-to-Golgi trafficking of the phosphatidylinositide phosphatase SACM1L. This is Transmembrane protein 39A (Tmem39a) from Mus musculus (Mouse).